The chain runs to 176 residues: Endoribonuclease YbeY (176 aa).

Zn(2+)-binding residues include His-138, His-142, and His-148.

It belongs to the endoribonuclease YbeY family. Zn(2+) is required as a cofactor.

It is found in the cytoplasm. Single strand-specific metallo-endoribonuclease involved in late-stage 70S ribosome quality control and in maturation of the 3' terminus of the 16S rRNA. The protein is Endoribonuclease YbeY of Trichormus variabilis (strain ATCC 29413 / PCC 7937) (Anabaena variabilis).